The sequence spans 145 residues: Large ribosomal subunit protein uL15 (145 aa).

Residues 1–50 form a disordered region; it reads MRLNTLSPAAGSKPEKQRRGRGIGSGLGKTGGRGVKGQTSRSGGGKVRAG. Over residues 22–35 the composition is skewed to gly residues; sequence GIGSGLGKTGGRGV.

The protein belongs to the universal ribosomal protein uL15 family. Part of the 50S ribosomal subunit.

Its function is as follows. Binds to the 23S rRNA. The chain is Large ribosomal subunit protein uL15 from Aeromonas salmonicida (strain A449).